A 364-amino-acid polypeptide reads, in one-letter code: Fructose-1,6-bisphosphatase class 1 2 (364 aa).

4 residues coordinate Mg(2+): E99, D121, L123, and D124. Substrate is bound by residues 124–127 (DGSS) and N220. A Mg(2+)-binding site is contributed by E292.

Belongs to the FBPase class 1 family. As to quaternary structure, homotetramer. The cofactor is Mg(2+).

The protein resides in the cytoplasm. The enzyme catalyses beta-D-fructose 1,6-bisphosphate + H2O = beta-D-fructose 6-phosphate + phosphate. It functions in the pathway carbohydrate biosynthesis; gluconeogenesis. This is Fructose-1,6-bisphosphatase class 1 2 from Polaromonas naphthalenivorans (strain CJ2).